An 804-amino-acid chain; its full sequence is Ribonucleoside-diphosphate reductase large subunit-like protein (804 aa).

It belongs to the ribonucleoside diphosphate reductase large chain family. As to quaternary structure, the genome of human herpesvirus-6 does not code for a ribonucleotide reductase small subunit.

It is found in the virion. Its subcellular location is the host cytoplasm. In terms of biological role, does not possess a ribonucleotide reductase activity. Betaherpesviruses probably use another strategy to expand the dNTP pool in a quiescent host cell. In Human herpesvirus 6B (strain Z29) (HHV-6 variant B), this protein is Ribonucleoside-diphosphate reductase large subunit-like protein.